Reading from the N-terminus, the 338-residue chain is Fructose-1,6-bisphosphatase class 1 (338 aa).

Mg(2+) is bound by residues glutamate 91, aspartate 113, leucine 115, and aspartate 116. Substrate-binding positions include 116–119 (DGSS), asparagine 208, and lysine 274. Residue glutamate 280 participates in Mg(2+) binding.

Belongs to the FBPase class 1 family. In terms of assembly, homotetramer. It depends on Mg(2+) as a cofactor.

The protein resides in the cytoplasm. It catalyses the reaction beta-D-fructose 1,6-bisphosphate + H2O = beta-D-fructose 6-phosphate + phosphate. It participates in carbohydrate biosynthesis; gluconeogenesis. The protein is Fructose-1,6-bisphosphatase class 1 of Ralstonia pickettii (strain 12J).